The sequence spans 611 residues: Dihydroxy-acid dehydratase (611 aa).

Aspartate 81 is a Mg(2+) binding site. Cysteine 122 is a binding site for [2Fe-2S] cluster. Residues aspartate 123 and lysine 124 each contribute to the Mg(2+) site. Position 124 is an N6-carboxylysine (lysine 124). [2Fe-2S] cluster is bound at residue cysteine 195. Glutamate 491 serves as a coordination point for Mg(2+). Residue serine 517 is the Proton acceptor of the active site.

The protein belongs to the IlvD/Edd family. Homodimer. It depends on [2Fe-2S] cluster as a cofactor. Mg(2+) is required as a cofactor.

It carries out the reaction (2R)-2,3-dihydroxy-3-methylbutanoate = 3-methyl-2-oxobutanoate + H2O. It catalyses the reaction (2R,3R)-2,3-dihydroxy-3-methylpentanoate = (S)-3-methyl-2-oxopentanoate + H2O. The protein operates within amino-acid biosynthesis; L-isoleucine biosynthesis; L-isoleucine from 2-oxobutanoate: step 3/4. It participates in amino-acid biosynthesis; L-valine biosynthesis; L-valine from pyruvate: step 3/4. Its function is as follows. Functions in the biosynthesis of branched-chain amino acids. Catalyzes the dehydration of (2R,3R)-2,3-dihydroxy-3-methylpentanoate (2,3-dihydroxy-3-methylvalerate) into 2-oxo-3-methylpentanoate (2-oxo-3-methylvalerate) and of (2R)-2,3-dihydroxy-3-methylbutanoate (2,3-dihydroxyisovalerate) into 2-oxo-3-methylbutanoate (2-oxoisovalerate), the penultimate precursor to L-isoleucine and L-valine, respectively. The protein is Dihydroxy-acid dehydratase of Glaesserella parasuis serovar 5 (strain SH0165) (Haemophilus parasuis).